The sequence spans 382 residues: Protein shisa-9A (382 aa).

The N-terminal stretch at 1 to 26 (MKWTVLLLEYFLVKVLVLLYSADGEA) is a signal peptide. Residues 27–132 (QQLEGFIMLS…DPRHDPTKDK (106 aa)) lie on the Extracellular side of the membrane. Asparagine 39 carries N-linked (GlcNAc...) asparagine glycosylation. Residues 133 to 153 (TNLIVYIICGVVAIMALVGIF) form a helical membrane-spanning segment. Residues 154 to 382 (TKLGLEKAHR…VTNSKAEVTV (229 aa)) are Cytoplasmic-facing.

This sequence belongs to the shisa family. SHISA9 subfamily. In terms of assembly, component of some AMPA receptors (ionotropic glutamate receptors) complex.

Its subcellular location is the cell projection. The protein localises to the dendritic spine membrane. It is found in the synapse. Its function is as follows. Regulator of short-term neuronal synaptic plasticity in the dentate gyrus. Associates with AMPA receptors (ionotropic glutamate receptors) in synaptic spines and promotes AMPA receptor desensitization at excitatory synapses. The polypeptide is Protein shisa-9A (shisa9a) (Danio rerio (Zebrafish)).